Here is a 368-residue protein sequence, read N- to C-terminus: GTPase Obg (368 aa).

The region spanning 1 to 161 (MRFVDEATIT…RSLRLELKIL (161 aa)) is the Obg domain. Residues 162–337 (ADAGLLGLPN…VVAEMWRMRD (176 aa)) form the OBG-type G domain. Residues 168-175 (GLPNAGKS), 193-197 (FTTLI), 217-220 (DIPG), 290-293 (NKID), and 318-320 (SAL) contribute to the GTP site. Positions 175 and 195 each coordinate Mg(2+).

Belongs to the TRAFAC class OBG-HflX-like GTPase superfamily. OBG GTPase family. As to quaternary structure, monomer. Mg(2+) is required as a cofactor.

Its subcellular location is the cytoplasm. Functionally, an essential GTPase which binds GTP, GDP and possibly (p)ppGpp with moderate affinity, with high nucleotide exchange rates and a fairly low GTP hydrolysis rate. Plays a role in control of the cell cycle, stress response, ribosome biogenesis and in those bacteria that undergo differentiation, in morphogenesis control. This is GTPase Obg from Nitratidesulfovibrio vulgaris (strain DSM 19637 / Miyazaki F) (Desulfovibrio vulgaris).